A 505-amino-acid polypeptide reads, in one-letter code: ATP synthase subunit alpha (505 aa).

An ATP-binding site is contributed by glycine 171 to threonine 178.

This sequence belongs to the ATPase alpha/beta chains family. As to quaternary structure, F-type ATPases have 2 components, CF(1) - the catalytic core - and CF(0) - the membrane proton channel. CF(1) has five subunits: alpha(3), beta(3), gamma(1), delta(1), epsilon(1). CF(0) has three main subunits: a(1), b(2) and c(9-12). The alpha and beta chains form an alternating ring which encloses part of the gamma chain. CF(1) is attached to CF(0) by a central stalk formed by the gamma and epsilon chains, while a peripheral stalk is formed by the delta and b chains.

The protein resides in the cell inner membrane. It catalyses the reaction ATP + H2O + 4 H(+)(in) = ADP + phosphate + 5 H(+)(out). Produces ATP from ADP in the presence of a proton gradient across the membrane. The alpha chain is a regulatory subunit. This Campylobacter concisus (strain 13826) protein is ATP synthase subunit alpha.